A 457-amino-acid polypeptide reads, in one-letter code: Adenylosuccinate synthetase isozyme 1 (457 aa).

The tract at residues 1–25 (MSGTRASNDRPPSAGGVKRGRLQHE) is disordered. GTP contacts are provided by residues 42-48 (GDEGKGK) and 70-72 (GHT). Residue D43 is the Proton acceptor of the active site. Mg(2+) contacts are provided by D43 and G70. Residue D43 participates in substrate binding. IMP is bound by residues 43-46 (DEGK), 68-71 (NAGH), T163, R177, N256, T271, and R335. The Proton donor role is filled by H71. A substrate-binding site is contributed by 331-337 (VTTGRKR). GTP is bound by residues R337, 363–365 (KLD), and 445–448 (GVGK).

Belongs to the adenylosuccinate synthetase family. As to quaternary structure, homodimer. Requires Mg(2+) as cofactor.

It is found in the cytoplasm. It carries out the reaction IMP + L-aspartate + GTP = N(6)-(1,2-dicarboxyethyl)-AMP + GDP + phosphate + 2 H(+). Its pathway is purine metabolism; AMP biosynthesis via de novo pathway; AMP from IMP: step 1/2. Component of the purine nucleotide cycle (PNC), which interconverts IMP and AMP to regulate the nucleotide levels in various tissues, and which contributes to glycolysis and ammoniagenesis. Catalyzes the first committed step in the biosynthesis of AMP from IMP. The sequence is that of Adenylosuccinate synthetase isozyme 1 from Bos taurus (Bovine).